The following is a 65-amino-acid chain: ACSKQLGEKCKCNKQCCGATVVCGTIWVGGKEVNKCMSKTSNNWFLNKLGEGMNAVANAFSISCN.

In terms of processing, contains 4 disulfide bonds. Expressed by the venom gland.

The protein localises to the secreted. In terms of biological role, in vivo, intrathorax injection into crickets causes death. In Macrothele gigas (Japanese funnel web spider), this protein is U15-hexatoxin-Mg1b.